The chain runs to 632 residues: Tetratricopeptide repeat protein 39B (632 aa).

TPR repeat units follow at residues 343 to 376 (SLVL…QEEW), 535 to 568 (CLVK…EKLL), and 576 to 609 (PFTL…YKDY).

It belongs to the TTC39 family.

In terms of biological role, regulates high density lipoprotein (HDL) cholesterol metabolism by promoting the ubiquitination and degradation of the oxysterols receptors LXR (NR1H2 and NR1H3). The polypeptide is Tetratricopeptide repeat protein 39B (TTC39B) (Macaca fascicularis (Crab-eating macaque)).